The chain runs to 221 residues: MSGKPVLHYANTRGRMESVRWLLAAAGVEFEEKFLEKKEDLQKLKSDGSLLFQQVPMVEIDGMKMVQTRAILNYIAGKYNLYGKDLKERALIDMYVEGLADLYELIMMNVVQPADKKEEHLANALDKAANRYFPVFEKVLKDHGHDFLVGNKLSRADVHLLETILAVEESKPDALAKFPLLQSFKARTSNIPNIKKFLQPGSQRKPRLEEKDIPRLMAIFH.

In terms of domain architecture, GST N-terminal spans glycine 3–glycine 83. Residues tyrosine 9, lysine 45, glutamine 54–valine 55, and glutamine 67–threonine 68 contribute to the glutathione site. Residues aspartate 85–leucine 208 form the GST C-terminal domain.

It belongs to the GST superfamily. Alpha family. As to quaternary structure, homodimer or heterodimer of GSTA1 and GSTA2.

It carries out the reaction RX + glutathione = an S-substituted glutathione + a halide anion + H(+). The catalysed reaction is prostaglandin A2 + glutathione = prostaglandin A2-S-(R)-glutathione. The enzyme catalyses prostaglandin J2 + glutathione = prostaglandin J2-S-(R)-glutathione. It catalyses the reaction (13S)-hydroperoxy-(9Z,11E)-octadecadienoate + 2 glutathione = (13S)-hydroxy-(9Z,11E)-octadecadienoate + glutathione disulfide + H2O. It carries out the reaction androst-5-ene-3,17-dione = androst-4-ene-3,17-dione. Functionally, glutathione S-transferase that catalyzes the nucleophilic attack of the sulfur atom of glutathione on the electrophilic groups of a wide range of exogenous and endogenous compounds. Involved in the formation of glutathione conjugates of both prostaglandin A2 (PGA2) and prostaglandin J2 (PGJ2). It also catalyzes the isomerization of D5-androstene-3,17-dione (AD) into D4-androstene-3,17-dione and may therefore play an important role in hormone biosynthesis. Through its glutathione-dependent peroxidase activity toward the fatty acid hydroperoxide (13S)-hydroperoxy-(9Z,11E)-octadecadienoate/13-HPODE it is also involved in the metabolism of oxidized linoleic acid. The protein is Glutathione S-transferase of Gallus gallus (Chicken).